Here is a 341-residue protein sequence, read N- to C-terminus: NADH-quinone oxidoreductase subunit H (341 aa).

Helical transmembrane passes span 4-24, 38-58, 70-90, 115-135, 161-181, 187-207, 239-259, 275-295, and 314-334; these read LVNI…LTYF, PSVV…KLLI, ILFI…WAVI, VGVL…IIAG, IGLI…GEMV, MPFW…ISLL, LFFL…TIFF, IPGL…FIWI, and VFLP…LFTG.

It belongs to the complex I subunit 1 family. In terms of assembly, NDH-1 is composed of 14 different subunits. Subunits NuoA, H, J, K, L, M, N constitute the membrane sector of the complex.

It localises to the cell membrane. The enzyme catalyses a quinone + NADH + 5 H(+)(in) = a quinol + NAD(+) + 4 H(+)(out). Its function is as follows. NDH-1 shuttles electrons from NADH, via FMN and iron-sulfur (Fe-S) centers, to quinones in the respiratory chain. The immediate electron acceptor for the enzyme in this species is believed to be ubiquinone. Couples the redox reaction to proton translocation (for every two electrons transferred, four hydrogen ions are translocated across the cytoplasmic membrane), and thus conserves the redox energy in a proton gradient. This subunit may bind ubiquinone. This is NADH-quinone oxidoreductase subunit H from Wolbachia pipientis wMel.